The following is a 510-amino-acid chain: Maturase K (510 aa).

The protein belongs to the intron maturase 2 family. MatK subfamily.

It localises to the plastid. In terms of biological role, usually encoded in the trnK tRNA gene intron. Probably assists in splicing its own and other chloroplast group II introns. The protein is Maturase K of Bartsia alpina (Velvet bells).